The sequence spans 614 residues: Probable Xaa-Pro aminopeptidase P (614 aa).

The Mn(2+) site is built by Asp-411, Asp-422, Glu-520, and Glu-534.

Belongs to the peptidase M24B family. Mn(2+) is required as a cofactor.

It carries out the reaction Release of any N-terminal amino acid, including proline, that is linked to proline, even from a dipeptide or tripeptide.. In terms of biological role, catalyzes the removal of a penultimate prolyl residue from the N-termini of peptides. The polypeptide is Probable Xaa-Pro aminopeptidase P (AMPP) (Sordaria macrospora (strain ATCC MYA-333 / DSM 997 / K(L3346) / K-hell)).